The chain runs to 624 residues: Nif-specific regulatory protein (624 aa).

The 143-residue stretch at D29–V171 folds into the GAF domain. Positions V203–T431 constitute a Sigma-54 factor interaction domain. ATP contacts are provided by residues G231 to E238 and A294 to E303. Residues Q432–L581 are inter-domain linker. Residues C445 and C450 each contribute to the a divalent metal cation site. Disordered regions lie at residues V477–G508 and A549–S578. Low complexity predominate over residues A549–A563. The segment at R582 to F624 is C-terminal DNA-binding domain. The segment at residues Q596–R615 is a DNA-binding region (H-T-H motif).

In terms of assembly, interacts with sigma-54.

In terms of biological role, required for activation of most nif operons, which are directly involved in nitrogen fixation. The protein is Nif-specific regulatory protein (nifA) of Azospirillum lipoferum.